Here is a 1255-residue protein sequence, read N- to C-terminus: Kinesin-related protein 7 (1255 aa).

The disordered stretch occupies residues 1–26 (MESPVVEGNSGEVATPTLPQPPTPVS). The Kinesin motor domain occupies 28 to 349 (NIRVVCRVRP…LQFGTRAKTI (322 aa)). 107–114 (GQTASGKT) is a binding site for ATP. Low complexity-rich tracts occupy residues 454–491 (NNNN…QQEN), 545–563 (NNNN…DSDG), and 583–603 (HNIN…NSNS). Disordered regions lie at residues 454 to 503 (NNNN…NSSF), 530 to 564 (GNIS…SDGY), 579 to 628 (DLND…MDVN), 661 to 686 (ENEQ…SNAT), 795 to 864 (EEGS…TKSI), and 915 to 934 (ISIK…TSIK). The segment covering 608–628 (VSTSYITSSPNLSPSKSMDVN) has biased composition (polar residues). Over residues 813–834 (GDDDDEENEDNENEDVIVDSDE) the composition is skewed to acidic residues. Residues 915–932 (ISIKSNKEPSPSSSTTTS) are compositionally biased toward low complexity. The chain crosses the membrane as a helical span at residues 945–965 (IIFTIILTITLVSSSLLCLYL). The stretch at 1088 to 1223 (NYITKIDQLS…QELEDAPIAL (136 aa)) forms a coiled coil.

This sequence belongs to the TRAFAC class myosin-kinesin ATPase superfamily. Kinesin family.

It localises to the nucleus membrane. The protein resides in the cytoplasm. Its subcellular location is the cytoskeleton. Microtubule-associated force-producing protein that plays a role in organelle transport. Its motor activity is directed toward the microtubule's plus end. May be involved in cell motility or cell differentiation during prestalk formation. This is Kinesin-related protein 7 (kif7) from Dictyostelium discoideum (Social amoeba).